The following is a 332-amino-acid chain: Receptor polysaccharide phosphotransferase WefC (332 aa).

It belongs to the stealth family.

The sequence is that of Receptor polysaccharide phosphotransferase WefC (wefC) from Streptococcus oralis.